Reading from the N-terminus, the 397-residue chain is Transaldolase (397 aa).

The Schiff-base intermediate with substrate role is filled by Lys-136.

Belongs to the transaldolase family. Type 1 subfamily. In terms of assembly, homodimer.

Its subcellular location is the cytoplasm. The catalysed reaction is D-sedoheptulose 7-phosphate + D-glyceraldehyde 3-phosphate = D-erythrose 4-phosphate + beta-D-fructose 6-phosphate. It functions in the pathway carbohydrate degradation; pentose phosphate pathway; D-glyceraldehyde 3-phosphate and beta-D-fructose 6-phosphate from D-ribose 5-phosphate and D-xylulose 5-phosphate (non-oxidative stage): step 2/3. Its function is as follows. Transaldolase is important for the balance of metabolites in the pentose-phosphate pathway. This chain is Transaldolase, found in Synechococcus sp. (strain ATCC 27144 / PCC 6301 / SAUG 1402/1) (Anacystis nidulans).